We begin with the raw amino-acid sequence, 274 residues long: tRNA uridine(34) hydroxylase (274 aa).

Residues 121–217 (SRSDVYTIDT…YFKSTKNTNN (97 aa)) form the Rhodanese domain. Cys-177 (cysteine persulfide intermediate) is an active-site residue.

Belongs to the TrhO family.

It catalyses the reaction uridine(34) in tRNA + AH2 + O2 = 5-hydroxyuridine(34) in tRNA + A + H2O. Functionally, catalyzes oxygen-dependent 5-hydroxyuridine (ho5U) modification at position 34 in tRNAs. This chain is tRNA uridine(34) hydroxylase, found in Ehrlichia canis (strain Jake).